A 416-amino-acid polypeptide reads, in one-letter code: D-amino acid dehydrogenase (416 aa).

V3–W17 provides a ligand contact to FAD.

It belongs to the DadA oxidoreductase family. FAD serves as cofactor.

It catalyses the reaction a D-alpha-amino acid + A + H2O = a 2-oxocarboxylate + AH2 + NH4(+). It participates in amino-acid degradation; D-alanine degradation; NH(3) and pyruvate from D-alanine: step 1/1. In terms of biological role, oxidative deamination of D-amino acids. The sequence is that of D-amino acid dehydrogenase from Rhizorhabdus wittichii (strain DSM 6014 / CCUG 31198 / JCM 15750 / NBRC 105917 / EY 4224 / RW1) (Sphingomonas wittichii).